A 208-amino-acid polypeptide reads, in one-letter code: Uracil phosphoribosyltransferase (208 aa).

Residues R78, R103, and 130-138 (DPMLATGGS) contribute to the 5-phospho-alpha-D-ribose 1-diphosphate site. Uracil contacts are provided by residues I193 and 198–200 (GDA). D199 contributes to the 5-phospho-alpha-D-ribose 1-diphosphate binding site.

The protein belongs to the UPRTase family. The cofactor is Mg(2+).

It carries out the reaction UMP + diphosphate = 5-phospho-alpha-D-ribose 1-diphosphate + uracil. The protein operates within pyrimidine metabolism; UMP biosynthesis via salvage pathway; UMP from uracil: step 1/1. With respect to regulation, allosterically activated by GTP. Its function is as follows. Catalyzes the conversion of uracil and 5-phospho-alpha-D-ribose 1-diphosphate (PRPP) to UMP and diphosphate. The protein is Uracil phosphoribosyltransferase of Thermus thermophilus (strain ATCC 27634 / DSM 579 / HB8).